A 145-amino-acid polypeptide reads, in one-letter code: Protein BUD31 homolog 3 (145 aa).

The protein belongs to the BUD31 (G10) family.

Its subcellular location is the nucleus. The protein is Protein BUD31 homolog 3 of Oryza sativa subsp. japonica (Rice).